A 972-amino-acid polypeptide reads, in one-letter code: Structural polyprotein (972 aa).

Aspartate 26 is a binding site for a divalent metal cation. The 226-residue stretch at 509–734 folds into the Peptidase S50 domain; it reads SGSEAGSYSK…YLGQLMRTTA (226 aa). Catalysis depends on serine 633, which acts as the Nucleophile. The active site involves lysine 674. Disordered stretches follow at residues 797–817 and 917–972; these read STPP…AQEA and GGRG…DGEV. The segment covering 801 to 817 has biased composition (basic and acidic residues); that stretch reads KHQEKPKGPDQHTAQEA.

In terms of assembly, homotrimer. A central divalent metal (possibly cobalt) stabilizes the VP2 trimer. As to quaternary structure, homodimer. interacts (via C-terminus) with VP1 in the cytoplasm. Interacts with VP2. Specific enzymatic cleavages yield mature proteins. Capsid assembly seems to be regulated by polyprotein processing. The protease VP4 cleaves itself off the polyprotein, thus releasing pre-VP2 and VP3 within the infected cell. During capsid assembly, the C-terminus of pre-VP2 is further processed by VP4, giving rise to VP2, the external capsid protein and three small peptides that all stay closely associated with the capsid.

Its subcellular location is the virion. The protein localises to the host cytoplasm. Functionally, capsid protein VP2 self assembles to form an icosahedral capsid with a T=13 symmetry, about 70 nm in diameter, and consisting of 260 VP2 trimers. The capsid encapsulates the genomic dsRNA. VP2 is also involved in attachment and entry into the host cell. In terms of biological role, the precursor of VP2 plays an important role in capsid assembly. First, pre-VP2 and VP2 oligomers assemble to form a procapsid. Then, the pre-VP2 intermediates may be processed into VP2 proteins by proteolytic cleavage mediated by VP4 to obtain the mature virion. The final capsid is composed of pentamers and hexamers but VP2 has a natural tendency to assemble into all-pentameric structures. Therefore pre-VP2 may be required to allow formation of the hexameric structures. Protease VP4 is a serine protease that cleaves the polyprotein into its final products. Pre-VP2 is first partially cleaved, and may be completely processed by VP4 upon capsid maturation. Its function is as follows. Capsid protein VP3 plays a key role in virion assembly by providing a scaffold for the capsid composed of VP2. May self-assemble to form a T=4-like icosahedral inner-capsid composed of at least 180 trimers. Plays a role in genomic RNA packaging by recruiting VP1 into the capsid and interacting with the dsRNA genome segments to form a ribonucleoprotein complex. Additionally, the interaction of the VP3 C-terminal tail with VP1 removes the inherent structural blockade of the polymerase active site. Thus, VP3 can also function as a transcriptional activator. Functionally, structural peptide 1 is a small peptide derived from the C-terminus of pre-VP2. It destabilizes and perforates cell membranes, suggesting a role during viral entry. In terms of biological role, structural peptide 2 is a small peptide derived from the C-terminus of pre-VP2. It is not essential for virus viability, but viral growth is affected when this protein is absent. Structural peptide 3 is a small peptide derived from pre-VP2 C-terminus. It is not essential for virus viability, but viral growth is affected when this protein is absent. This chain is Structural polyprotein, found in Oncorhynchus mykiss (Rainbow trout).